The primary structure comprises 141 residues: Putative RING-H2 finger protein ATL62 (141 aa).

The chain crosses the membrane as a helical span at residues 14–32 (FFAILTVFYSIFRCCLAYC). The RING-type; degenerate zinc-finger motif lies at 79–121 (CVVCLSKFIDEDKARVLPSCNHCFHFDFTDTWLHSDYTCPNCR).

The protein belongs to the RING-type zinc finger family. ATL subfamily.

It localises to the membrane. It carries out the reaction S-ubiquitinyl-[E2 ubiquitin-conjugating enzyme]-L-cysteine + [acceptor protein]-L-lysine = [E2 ubiquitin-conjugating enzyme]-L-cysteine + N(6)-ubiquitinyl-[acceptor protein]-L-lysine.. It functions in the pathway protein modification; protein ubiquitination. This is Putative RING-H2 finger protein ATL62 (ATL62) from Arabidopsis thaliana (Mouse-ear cress).